The following is a 284-amino-acid chain: 3-oxoadipate:acetyl-CoA acetyltransferase (284 aa).

3 residues coordinate Zn(2+): histidine 47, histidine 49, and glutamate 229.

Belongs to the BKACE family. Zn(2+) serves as cofactor.

It carries out the reaction 3-oxoadipate + acetyl-CoA = acetoacetate + succinyl-CoA. Catalyzes the condensation of 3-oxoadipate (beta-ketoadipate) and acetyl-CoA, forming acetoacetate and succinyl-CoA. Is likely involved is the degradation of 3-oxoadipate through an alternative pathway, within catechol degradation. In Cupriavidus necator (strain ATCC 17699 / DSM 428 / KCTC 22496 / NCIMB 10442 / H16 / Stanier 337) (Ralstonia eutropha), this protein is 3-oxoadipate:acetyl-CoA acetyltransferase.